The sequence spans 145 residues: Probable thioredoxin-2 (145 aa).

Residues 39-144 (VFDIDSVEDF…LDDFIEDVLA (106 aa)) form the Thioredoxin domain. Active-site nucleophile residues include cysteine 68 and cysteine 71. A disulfide bond links cysteine 68 and cysteine 71.

The protein belongs to the thioredoxin family.

In terms of biological role, participates in various redox reactions through the reversible oxidation of its active center dithiol to a disulfide and catalyzes dithiol-disulfide exchange reactions. The protein is Probable thioredoxin-2 (trx-2) of Caenorhabditis elegans.